Consider the following 393-residue polypeptide: Phosphatidate cytidylyltransferase (393 aa).

8 helical membrane passes run 49 to 69 (NFFR…WISV), 73 to 93 (IYSF…IIGI), 108 to 128 (IILG…IMMM), 141 to 161 (LSFV…ASLR), 171 to 191 (LFAL…CAIF), 198 to 218 (FWFV…YVVG), 237 to 257 (GFIG…HLHV), and 290 to 310 (IHII…GFLA).

Belongs to the CDS family.

It localises to the membrane. It carries out the reaction a 1,2-diacyl-sn-glycero-3-phosphate + CTP + H(+) = a CDP-1,2-diacyl-sn-glycerol + diphosphate. The protein operates within phospholipid metabolism; CDP-diacylglycerol biosynthesis; CDP-diacylglycerol from sn-glycerol 3-phosphate: step 3/3. The sequence is that of Phosphatidate cytidylyltransferase (CDS1) from Encephalitozoon cuniculi (strain GB-M1) (Microsporidian parasite).